Consider the following 170-residue polypeptide: Large ribosomal subunit protein bL17 (170 aa).

Positions 134 to 144 are enriched in low complexity; it reads ASAKAAQAQEK. Positions 134 to 170 are disordered; sequence ASAKAAQAQEKPAQEEEVEATSDEVAYTSEPDKAAEH.

It belongs to the bacterial ribosomal protein bL17 family. In terms of assembly, part of the 50S ribosomal subunit. Contacts protein L32.

The sequence is that of Large ribosomal subunit protein bL17 from Mycobacterium leprae (strain Br4923).